The following is a 142-amino-acid chain: Large ribosomal subunit protein uL11 (142 aa).

This sequence belongs to the universal ribosomal protein uL11 family. Part of the ribosomal stalk of the 50S ribosomal subunit. Interacts with L10 and the large rRNA to form the base of the stalk. L10 forms an elongated spine to which L12 dimers bind in a sequential fashion forming a multimeric L10(L12)X complex. In terms of processing, one or more lysine residues are methylated.

Its function is as follows. Forms part of the ribosomal stalk which helps the ribosome interact with GTP-bound translation factors. This chain is Large ribosomal subunit protein uL11, found in Nitrobacter winogradskyi (strain ATCC 25391 / DSM 10237 / CIP 104748 / NCIMB 11846 / Nb-255).